Consider the following 570-residue polypeptide: Sulfite reductase [NADPH] hemoprotein beta-component (570 aa).

[4Fe-4S] cluster is bound by residues Cys434, Cys440, Cys479, and Cys483. Cys483 lines the siroheme pocket.

The protein belongs to the nitrite and sulfite reductase 4Fe-4S domain family. Alpha(8)-beta(8). The alpha component is a flavoprotein, the beta component is a hemoprotein. Siroheme is required as a cofactor. The cofactor is [4Fe-4S] cluster.

It catalyses the reaction hydrogen sulfide + 3 NADP(+) + 3 H2O = sulfite + 3 NADPH + 4 H(+). It functions in the pathway sulfur metabolism; hydrogen sulfide biosynthesis; hydrogen sulfide from sulfite (NADPH route): step 1/1. Component of the sulfite reductase complex that catalyzes the 6-electron reduction of sulfite to sulfide. This is one of several activities required for the biosynthesis of L-cysteine from sulfate. This chain is Sulfite reductase [NADPH] hemoprotein beta-component, found in Escherichia coli O17:K52:H18 (strain UMN026 / ExPEC).